Here is a 495-residue protein sequence, read N- to C-terminus: Potassium voltage-gated channel subfamily A member 1 (495 aa).

The disordered stretch occupies residues 1–30 (MTVMSGENVDEASAAPGHPQDGSYPRQADH). Residues 1–128 (MTVMSGENVD…FYELGEEAME (128 aa)) form a tetramerization domain region. Residues 1-164 (MTVMSGENVD…LLFEYPESSG (164 aa)) are Cytoplasmic-facing. The residue at position 23 (Ser23) is a Phosphoserine. Residues 165-186 (PARVIAIVSVMVILISIVIFCL) form a helical membrane-spanning segment. Over 187 to 220 (ETLPELKDDKDFTGTVHRIDNTTVIYNSNIFTDP) the chain is Extracellular. Asn207 carries N-linked (GlcNAc...) asparagine glycosylation. The helical transmembrane segment at 221–242 (FFIVETLCIIWFSFELVVRFFA) threads the bilayer. Residue Cys243 is the site of S-palmitoyl cysteine attachment. At 243–253 (CPSKTDFFKNI) the chain is on the cytoplasmic side. The chain crosses the membrane as a helical span at residues 254–274 (MNFIDIVAIIPYFITLGTEIA). Residues 275-287 (EQEGNQKGEQATS) are Extracellular-facing. Residues 288-308 (LAILRVIRLVRVFRIFKLSRH) form a helical; Voltage-sensor membrane-spanning segment. Over 309-323 (SKGLQILGQTLKASM) the chain is Cytoplasmic. The tract at residues 310–323 (KGLQILGQTLKASM) is S4-S5 linker. Position 322 is a phosphoserine; by PKA (Ser322). The helical transmembrane segment at 324–345 (RELGLLIFFLFIGVILFSSAVY) threads the bilayer. Over 346–359 (FAEAEEAESHFSSI) the chain is Extracellular. The segment at residues 360–371 (PDAFWWAVVSMT) is an intramembrane region (helical). The Selectivity filter motif lies at 372–377 (TVGYGD). Residues 372-379 (TVGYGDMY) lie within the membrane without spanning it. Residues 380–386 (PVTIGGK) lie on the Extracellular side of the membrane. Residues 387 to 415 (IVGSLCAIAGVLTIALPVPVIVSNFNYFY) traverse the membrane as a helical segment. The Cytoplasmic portion of the chain corresponds to 416–495 (HRETEGEEQA…VNKSKLLTDV (80 aa)). Phosphoserine occurs at positions 437 and 439. Phosphoserine; by PKA is present on Ser446. Positions 493–495 (TDV) match the PDZ-binding motif.

This sequence belongs to the potassium channel family. A (Shaker) (TC 1.A.1.2) subfamily. Kv1.1/KCNA1 sub-subfamily. As to quaternary structure, homotetramer and heterotetramer with other channel-forming alpha subunits, such as KCNA2, KCNA4, KCNA5, KCNA6 and KCNA7. Channel activity is regulated by interaction with the beta subunits KCNAB1 and KCNAB2. Identified in a complex with KCNA2 and KCNAB2. Interacts (via C-terminus) with the PDZ domains of DLG1, DLG2 and DLG4. Interacts with LGI1 within a complex containing LGI1, KCNA4 and KCNAB1. Interacts (via N-terminus) with STX1A; this promotes channel inactivation. Interacts (via N-terminus) with the heterodimer formed by GNB1 and GNG2; this promotes channel inactivation. Can interact simultaneously with STX1A and the heterodimer formed by GNB1 and GNG2. Interacts (via cytoplasmic N-terminal domain) with KCNRG; this inhibits channel activity. Interacts with ANK3; this inhibits channel activity. Interacts with ADAM11. In terms of processing, N-glycosylated. Palmitoylated on Cys-243; which may be required for membrane targeting. Post-translationally, phosphorylated on tyrosine residues. Phosphorylation increases in response to NRG1; this inhibits channel activity. Phosphorylation at Ser-446 regulates channel activity by down-regulating expression at the cell membrane. In terms of tissue distribution, detected adjacent to nodes of Ranvier in juxtaparanodal zones in spinal cord nerve fibers, but also in paranodal regions in some myelinated spinal cord axons (at protein level). Detected in the islet of Langerhans.

The protein localises to the cell membrane. The protein resides in the membrane. Its subcellular location is the cell projection. It localises to the axon. It is found in the cytoplasmic vesicle. The protein localises to the perikaryon. The protein resides in the endoplasmic reticulum. Its subcellular location is the dendrite. It localises to the cell junction. It is found in the synapse. The protein localises to the presynaptic cell membrane. The protein resides in the presynapse. The enzyme catalyses K(+)(in) = K(+)(out). Inhibited by 1.1 mM 4-aminopyridine (4-AP) and by 20 mM tetraethylammonium (TEA), but not by charybdotoxin (CTX). Inhibited by dendrotoxin (DTX). Functionally, voltage-gated potassium channel that mediates transmembrane potassium transport in excitable membranes, primarily in the brain and the central nervous system, but also in the kidney. Contributes to the regulation of the membrane potential and nerve signaling, and prevents neuronal hyperexcitability. Forms tetrameric potassium-selective channels through which potassium ions pass in accordance with their electrochemical gradient. The channel alternates between opened and closed conformations in response to the voltage difference across the membrane. Can form functional homotetrameric channels and heterotetrameric channels that contain variable proportions of KCNA1, KCNA2, KCNA4, KCNA5, KCNA6, KCNA7, and possibly other family members as well; channel properties depend on the type of alpha subunits that are part of the channel. Channel properties are modulated by cytoplasmic beta subunits that regulate the subcellular location of the alpha subunits and promote rapid inactivation of delayed rectifier potassium channels. In vivo, membranes probably contain a mixture of heteromeric potassium channel complexes, making it difficult to assign currents observed in intact tissues to any particular potassium channel family member. Homotetrameric KCNA1 forms a delayed-rectifier potassium channel that opens in response to membrane depolarization, followed by slow spontaneous channel closure. In contrast, a heterotetrameric channel formed by KCNA1 and KCNA4 shows rapid inactivation. Regulates neuronal excitability in hippocampus, especially in mossy fibers and medial perforant path axons, preventing neuronal hyperexcitability. Response to toxins that are selective for KCNA1, respectively for KCNA2, suggests that heteromeric potassium channels composed of both KCNA1 and KCNA2 play a role in pacemaking and regulate the output of deep cerebellar nuclear neurons. May function as down-stream effector for G protein-coupled receptors and inhibit GABAergic inputs to basolateral amygdala neurons. May contribute to the regulation of neurotransmitter release, such as gamma-aminobutyric acid (GABA) release. Plays a role in regulating the generation of action potentials and preventing hyperexcitability in myelinated axons of the vagus nerve, and thereby contributes to the regulation of heart contraction. Required for normal neuromuscular responses. Regulates the frequency of neuronal action potential firing in response to mechanical stimuli, and plays a role in the perception of pain caused by mechanical stimuli, but does not play a role in the perception of pain due to heat stimuli. Required for normal responses to auditory stimuli and precise location of sound sources, but not for sound perception. The use of toxins that block specific channels suggest that it contributes to the regulation of the axonal release of the neurotransmitter dopamine. Required for normal postnatal brain development and normal proliferation of neuronal precursor cells in the brain. Plays a role in the reabsorption of Mg(2+) in the distal convoluted tubules in the kidney and in magnesium ion homeostasis, probably via its effect on the membrane potential. The protein is Potassium voltage-gated channel subfamily A member 1 of Homo sapiens (Human).